The sequence spans 340 residues: Myb-related protein Zm1 (340 aa).

HTH myb-type domains follow at residues 11-63 and 64-118; these read KVGL…INYL and RPDL…KKKV. 2 consecutive DNA-binding regions (H-T-H motif) follow at residues 39–63 and 91–114; these read WRAL…INYL and WSKI…NTHL. A compositionally biased stretch (basic residues) spans 116 to 126; the sequence is KKVAQREKKKA. 2 disordered regions span residues 116–173 and 190–209; these read KKVA…DATD and DGAP…SSLT. Residues 133-166 show a composition bias toward low complexity; sequence AGTPATAPLSSATSSTTTHNSSGGSDSGDQCGTS.

Its subcellular location is the nucleus. Functionally, transcription factor that positively regulates genes involved in anthocyanin biosynthesis such as A1. This chain is Myb-related protein Zm1, found in Zea mays (Maize).